The chain runs to 306 residues: MNVKRKATLKFGICIGLLCVSFTGFNSLFGSTHAEAKSIENTKMTSCITNQKFVQLEKKFDARLGVYAIDTGSNKTIAYRPNERFAYASTYKVLAAAAVLKQKPIEKLNDVIRYTKEDLVTYSPITEKHLDTGMSLKEISEAAIRYSDNTAGNILLQQLGGPKGFEKSLKQIGDHVTKADRFETDLNSAIPGDIRDTSTAKALATDLKAFTLGNTLTTDKRTILTDWMRGNATGDELIRAGAPAGWEVGDKSGAGSYGTRNDIAIVWPPDRAPIVLAILTKRFTKDAEYDNALIAEAAKVALDDLK.

The first 34 residues, 1–34, serve as a signal peptide directing secretion; it reads MNVKRKATLKFGICIGLLCVSFTGFNSLFGSTHA. Serine 89 acts as the Acyl-ester intermediate in catalysis. 251–253 lines the substrate pocket; that stretch reads KSG.

The protein belongs to the class-A beta-lactamase family.

The catalysed reaction is a beta-lactam + H2O = a substituted beta-amino acid. This protein is a beta-lactamase with a substrate specificity for penicillins. This is Beta-lactamase (penP) from Bacillus amyloliquefaciens (Bacillus velezensis).